Here is a 219-residue protein sequence, read N- to C-terminus: Protein-L-isoaspartate O-methyltransferase (219 aa).

Residue Ser67 is part of the active site.

Belongs to the methyltransferase superfamily. L-isoaspartyl/D-aspartyl protein methyltransferase family.

It is found in the cytoplasm. It catalyses the reaction [protein]-L-isoaspartate + S-adenosyl-L-methionine = [protein]-L-isoaspartate alpha-methyl ester + S-adenosyl-L-homocysteine. Its function is as follows. Catalyzes the methyl esterification of L-isoaspartyl residues in peptides and proteins that result from spontaneous decomposition of normal L-aspartyl and L-asparaginyl residues. It plays a role in the repair and/or degradation of damaged proteins. The polypeptide is Protein-L-isoaspartate O-methyltransferase (Cereibacter sphaeroides (strain ATCC 17029 / ATH 2.4.9) (Rhodobacter sphaeroides)).